We begin with the raw amino-acid sequence, 446 residues long: Histidine--tRNA ligase (446 aa).

The protein belongs to the class-II aminoacyl-tRNA synthetase family. As to quaternary structure, homodimer.

The protein localises to the cytoplasm. It carries out the reaction tRNA(His) + L-histidine + ATP = L-histidyl-tRNA(His) + AMP + diphosphate + H(+). The chain is Histidine--tRNA ligase from Burkholderia pseudomallei (strain 668).